The primary structure comprises 215 residues: Autophagy-related protein 101 (215 aa).

Positions 124 to 147 (PVGKSHHSKLVMDPGEASEERSSR) are disordered.

The protein belongs to the ATG101 family. Interacts with ATG11 and ATG13A.

The protein resides in the cytoplasmic vesicle. The protein localises to the autophagosome. Functionally, accessory protein involved in autophagy. Acts as a scaffold protein of the ATG1-ATG13 complex for faithful delivery of autophagic vesicles to the vacuole. Required for selective mitophagy. The chain is Autophagy-related protein 101 from Arabidopsis thaliana (Mouse-ear cress).